Here is a 457-residue protein sequence, read N- to C-terminus: MKLSRIVRGANQWLSKTPERALDQAYRAALKIKELEDKHFQGKKVSPDTAQYGDSVMTYFEAELQGYLQTIKVRLGVFKTSRLFTSLSEPTHPRDERIALEQDSHGNRLLQKLKFIDDVISKYKTNEIVTAHSSDNGVIRGSELTPLNQQQVVIEANGKVPPPKKTNPQPAKKLTNLTVDEPKNKLDSATDKTGVLPRSFLNTINRIKQEIDPKSEETEEAVLKRFRTSRYKTAISIKFILLLIIVPLLTHQLTKTFFLTPVVEHYFSQHEQVVFINKDLEEEAFVELRSFEEALHFKSLIGIIPKLTQEEIEQEVRLKAEEISESYRLEGINAISNVFADIFSLIAFGVVIATSRKEIEIVKSFLDGILYSLSDSAKAFLIILFTDMFVGFHSPHGWEVILEGVARHFGLPENRDFNFLFIATFPVILDTVLKYWIFRYLNRISPSAVATYRNMNE.

Helical transmembrane passes span 239-259 (FILL…TFFL), 332-352 (INAI…GVVI), 368-390 (GILY…DMFV), and 417-437 (FNFL…KYWI).

It belongs to the CemA family.

It localises to the cell inner membrane. Functionally, required for H(+) efflux immediately after light irradiation to form a rapid H(+) concentration gradient across the thylakoid membranes. Together with PxcL, contributes to transient H(+) uptake following dark to light transition. The polypeptide is Proton extrusion protein PxcA (Gloeothece citriformis (strain PCC 7424) (Cyanothece sp. (strain PCC 7424))).